The chain runs to 146 residues: Large ribosomal subunit protein uL15 (146 aa).

Residues 1 to 52 (MKLSNLSPKAGSKKRRRRVGRGIAAGQGASCGFGMRGQKSRSGTGTKAGFEG) are disordered. Positions 11–20 (GSKKRRRRVG) are enriched in basic residues. A compositionally biased stretch (gly residues) spans 23 to 35 (IAAGQGASCGFGM).

It belongs to the universal ribosomal protein uL15 family. As to quaternary structure, part of the 50S ribosomal subunit.

In terms of biological role, binds to the 23S rRNA. The sequence is that of Large ribosomal subunit protein uL15 from Picosynechococcus sp. (strain ATCC 27264 / PCC 7002 / PR-6) (Agmenellum quadruplicatum).